The chain runs to 165 residues: Putative 4-hydroxy-4-methyl-2-oxoglutarate aldolase (165 aa).

Residues 80–83 (GGNL) and arginine 102 contribute to the substrate site. Aspartate 103 provides a ligand contact to a divalent metal cation.

Belongs to the class II aldolase/RraA-like family. As to quaternary structure, homotrimer. The cofactor is a divalent metal cation.

The catalysed reaction is 4-hydroxy-4-methyl-2-oxoglutarate = 2 pyruvate. It catalyses the reaction oxaloacetate + H(+) = pyruvate + CO2. Its function is as follows. Catalyzes the aldol cleavage of 4-hydroxy-4-methyl-2-oxoglutarate (HMG) into 2 molecules of pyruvate. Also contains a secondary oxaloacetate (OAA) decarboxylase activity due to the common pyruvate enolate transition state formed following C-C bond cleavage in the retro-aldol and decarboxylation reactions. The chain is Putative 4-hydroxy-4-methyl-2-oxoglutarate aldolase from Burkholderia mallei (strain NCTC 10247).